The sequence spans 559 residues: DNA ligase (559 aa).

Glu247 is an ATP binding site. The N6-AMP-lysine intermediate role is filled by Lys249. ATP is bound by residues Arg254, Arg269, Glu299, Phe339, Arg414, and Lys420.

Belongs to the ATP-dependent DNA ligase family. Monomer. Mg(2+) serves as cofactor.

The enzyme catalyses ATP + (deoxyribonucleotide)n-3'-hydroxyl + 5'-phospho-(deoxyribonucleotide)m = (deoxyribonucleotide)n+m + AMP + diphosphate.. It carries out the reaction NAD(+) + (deoxyribonucleotide)n-3'-hydroxyl + 5'-phospho-(deoxyribonucleotide)m = (deoxyribonucleotide)n+m + AMP + beta-nicotinamide D-nucleotide.. DNA ligase that seals nicks in double-stranded DNA during DNA replication, DNA recombination and DNA repair. Can also use NAD, but less efficiently than ATP. The polypeptide is DNA ligase (Thermococcus kodakarensis (strain ATCC BAA-918 / JCM 12380 / KOD1) (Pyrococcus kodakaraensis (strain KOD1))).